The following is a 437-amino-acid chain: MPIISKVVARQILDSRGNPTVEVDVYTESSFGRAAVPSGASTGVHEAVELRDGDASVYLGKGVLKAVENVNTVISDALEGMLVTEQEEIDEMLLALDGTPNKSNLGANALLGVSLACARAGAEYTGLPLYRYIGGTMANTLPVPMMNVLNGGAHADNTVDFQEFMIMPAGFTSFSDALRAGAEIFHSLKALLKSKGLSTAVGDEGGFAPNLRSNEEAIELVIEAIGKAGYKVGSPTDKGGLGDAQVMIALDPASSEFYDAAKKRYVFKKSSKQELTSTEMAEYWERWVNTYPIISIEDGMAEDDWEGWKLLTDKVGSRVQLVGDDLFVTNSIRLADGINRKVANSILIKVNQIGTLTETLQAINLARLNGYTSVISHRSGETEDSTIAQIAVATNAGQIKTGSMSRSDRMAKYNELLRIEEELGSQARYPGKAAFRV.

Position 162 (glutamine 162) interacts with (2R)-2-phosphoglycerate. The active-site Proton donor is the glutamate 204. Mg(2+)-binding residues include aspartate 251, glutamate 297, and aspartate 324. Residues lysine 349, arginine 378, serine 379, and lysine 400 each coordinate (2R)-2-phosphoglycerate. The active-site Proton acceptor is the lysine 349.

It belongs to the enolase family. Mg(2+) serves as cofactor.

The protein localises to the cytoplasm. Its subcellular location is the secreted. It is found in the cell surface. The enzyme catalyses (2R)-2-phosphoglycerate = phosphoenolpyruvate + H2O. It participates in carbohydrate degradation; glycolysis; pyruvate from D-glyceraldehyde 3-phosphate: step 4/5. In terms of biological role, catalyzes the reversible conversion of 2-phosphoglycerate (2-PG) into phosphoenolpyruvate (PEP). It is essential for the degradation of carbohydrates via glycolysis. This chain is Enolase, found in Chlorobium chlorochromatii (strain CaD3).